A 167-amino-acid polypeptide reads, in one-letter code: uncharacterized protein (167 aa).

The segment at 140–167 is disordered; it reads SSEEKKKKKKKKKEKSLHTEREKKKKKF. Over residues 145–154 the composition is skewed to basic residues; the sequence is KKKKKKKKEK.

This is an uncharacterized protein from Saccharomyces cerevisiae (strain ATCC 204508 / S288c) (Baker's yeast).